A 547-amino-acid chain; its full sequence is Chaperonin GroEL (547 aa).

ATP is bound by residues Thr29–Pro32, Lys50, Asp86–Thr90, Gly414, Asn477–Ala479, and Asp493.

Belongs to the chaperonin (HSP60) family. In terms of assembly, forms a cylinder of 14 subunits composed of two heptameric rings stacked back-to-back. Interacts with the co-chaperonin GroES.

The protein localises to the cytoplasm. It catalyses the reaction ATP + H2O + a folded polypeptide = ADP + phosphate + an unfolded polypeptide.. Together with its co-chaperonin GroES, plays an essential role in assisting protein folding. The GroEL-GroES system forms a nano-cage that allows encapsulation of the non-native substrate proteins and provides a physical environment optimized to promote and accelerate protein folding. In Campylobacter rectus (Wolinella recta), this protein is Chaperonin GroEL.